The following is a 172-amino-acid chain: Translation initiation factor IF-3 (172 aa).

The protein belongs to the IF-3 family. As to quaternary structure, monomer.

It is found in the cytoplasm. IF-3 binds to the 30S ribosomal subunit and shifts the equilibrium between 70S ribosomes and their 50S and 30S subunits in favor of the free subunits, thus enhancing the availability of 30S subunits on which protein synthesis initiation begins. This Bartonella henselae (strain ATCC 49882 / DSM 28221 / CCUG 30454 / Houston 1) (Rochalimaea henselae) protein is Translation initiation factor IF-3.